We begin with the raw amino-acid sequence, 284 residues long: Polyamine aminopropyltransferase (284 aa).

In terms of domain architecture, PABS spans 4 to 238 (EVWNTERLHD…GPMALGWGSH (235 aa)). Gln33 lines the S-methyl-5'-thioadenosine pocket. His64 and Asp88 together coordinate spermidine. Residues Glu108 and 140–141 (DG) each bind S-methyl-5'-thioadenosine. Asp158 functions as the Proton acceptor in the catalytic mechanism. Residue 158–161 (DSTD) participates in spermidine binding. Pro165 is a binding site for S-methyl-5'-thioadenosine.

The protein belongs to the spermidine/spermine synthase family. As to quaternary structure, homodimer or homotetramer.

The protein resides in the cytoplasm. The enzyme catalyses S-adenosyl 3-(methylsulfanyl)propylamine + putrescine = S-methyl-5'-thioadenosine + spermidine + H(+). It participates in amine and polyamine biosynthesis; spermidine biosynthesis; spermidine from putrescine: step 1/1. Functionally, catalyzes the irreversible transfer of a propylamine group from the amino donor S-adenosylmethioninamine (decarboxy-AdoMet) to putrescine (1,4-diaminobutane) to yield spermidine. This is Polyamine aminopropyltransferase from Ruegeria sp. (strain TM1040) (Silicibacter sp.).